A 179-amino-acid polypeptide reads, in one-letter code: Large ribosomal subunit protein uL5 (179 aa).

Belongs to the universal ribosomal protein uL5 family. Part of the 50S ribosomal subunit; part of the 5S rRNA/L5/L18/L25 subcomplex. Contacts the 5S rRNA and the P site tRNA. Forms a bridge to the 30S subunit in the 70S ribosome.

This is one of the proteins that bind and probably mediate the attachment of the 5S RNA into the large ribosomal subunit, where it forms part of the central protuberance. In the 70S ribosome it contacts protein S13 of the 30S subunit (bridge B1b), connecting the 2 subunits; this bridge is implicated in subunit movement. Contacts the P site tRNA; the 5S rRNA and some of its associated proteins might help stabilize positioning of ribosome-bound tRNAs. This chain is Large ribosomal subunit protein uL5, found in Shewanella denitrificans (strain OS217 / ATCC BAA-1090 / DSM 15013).